Reading from the N-terminus, the 254-residue chain is 3-deoxy-manno-octulosonate cytidylyltransferase (254 aa).

The protein belongs to the KdsB family.

It is found in the cytoplasm. The catalysed reaction is 3-deoxy-alpha-D-manno-oct-2-ulosonate + CTP = CMP-3-deoxy-beta-D-manno-octulosonate + diphosphate. The protein operates within nucleotide-sugar biosynthesis; CMP-3-deoxy-D-manno-octulosonate biosynthesis; CMP-3-deoxy-D-manno-octulosonate from 3-deoxy-D-manno-octulosonate and CTP: step 1/1. It participates in bacterial outer membrane biogenesis; lipopolysaccharide biosynthesis. In terms of biological role, activates KDO (a required 8-carbon sugar) for incorporation into bacterial lipopolysaccharide in Gram-negative bacteria. The chain is 3-deoxy-manno-octulosonate cytidylyltransferase from Polynucleobacter asymbioticus (strain DSM 18221 / CIP 109841 / QLW-P1DMWA-1) (Polynucleobacter necessarius subsp. asymbioticus).